The following is a 95-amino-acid chain: MRIEVIKREENVLEFYLEGEDHTFANLLNEVLHENEHVTFAGYTIEHPVLMARKPKFRVVTDGKITPEQVLEEAAQKIFDRARAVLEAWKEVLGE.

It belongs to the archaeal Rpo11/eukaryotic RPB11/RPC19 RNA polymerase subunit family. As to quaternary structure, part of the RNA polymerase complex.

The protein resides in the cytoplasm. It catalyses the reaction RNA(n) + a ribonucleoside 5'-triphosphate = RNA(n+1) + diphosphate. Functionally, DNA-dependent RNA polymerase (RNAP) catalyzes the transcription of DNA into RNA using the four ribonucleoside triphosphates as substrates. This is DNA-directed RNA polymerase subunit Rpo11 from Thermococcus onnurineus (strain NA1).